Reading from the N-terminus, the 953-residue chain is Isoleucine--tRNA ligase (953 aa).

Residues 57-67 (PYANGDIHIGH) carry the 'HIGH' region motif. Glu582 lines the L-isoleucyl-5'-AMP pocket. The 'KMSKS' region signature appears at 623 to 627 (KMSKS). Position 626 (Lys626) interacts with ATP. Residues Cys916, Cys919, Cys936, and Cys939 each coordinate Zn(2+).

This sequence belongs to the class-I aminoacyl-tRNA synthetase family. IleS type 1 subfamily. As to quaternary structure, monomer. Requires Zn(2+) as cofactor.

The protein resides in the cytoplasm. The enzyme catalyses tRNA(Ile) + L-isoleucine + ATP = L-isoleucyl-tRNA(Ile) + AMP + diphosphate. Functionally, catalyzes the attachment of isoleucine to tRNA(Ile). As IleRS can inadvertently accommodate and process structurally similar amino acids such as valine, to avoid such errors it has two additional distinct tRNA(Ile)-dependent editing activities. One activity is designated as 'pretransfer' editing and involves the hydrolysis of activated Val-AMP. The other activity is designated 'posttransfer' editing and involves deacylation of mischarged Val-tRNA(Ile). In Bordetella bronchiseptica (strain ATCC BAA-588 / NCTC 13252 / RB50) (Alcaligenes bronchisepticus), this protein is Isoleucine--tRNA ligase.